The following is a 201-amino-acid chain: Holliday junction resolvase RecU (201 aa).

The segment at 1-26 (MAIGYPNGKKYAASQEELPQQKRKAP) is disordered. Mg(2+) contacts are provided by T87, D89, E102, and Q121.

Belongs to the RecU family. Requires Mg(2+) as cofactor.

The protein localises to the cytoplasm. The catalysed reaction is Endonucleolytic cleavage at a junction such as a reciprocal single-stranded crossover between two homologous DNA duplexes (Holliday junction).. Endonuclease that resolves Holliday junction intermediates in genetic recombination. Cleaves mobile four-strand junctions by introducing symmetrical nicks in paired strands. Promotes annealing of linear ssDNA with homologous dsDNA. Required for DNA repair, homologous recombination and chromosome segregation. The chain is Holliday junction resolvase RecU from Listeria monocytogenes serotype 4a (strain HCC23).